A 575-amino-acid chain; its full sequence is MKRTHTCGELTLQNVDQKVILQGWVKKIRKLGAMVFIDLKDRYGITQLVIEQENINLINNLKNEYVIEISGIVVKRKSVNKELITGEIEVIVKDLLVINKSELTPFVLENDVNVNEDTRLTYRYLDLRRQVMQNNLIIRAKINHIIRNYLTDLNFLEVETPYFAKSTPEGARHFLVPSRLNKNKFYALPQSPQLFKQLLMISGIDRYYQIVRCFRDEDLRIDRQPEFTQLDLEMSFATSEDVMQISESLIKKILKEVKNFEIKEPLLRLSYKDAIDLYGSDKPDLRYELKIHTLNDIFKNSDIKMFLDSQNKYIRAVCIDQLLTKKQLEELNQQAKQFHFNSIAFIKVENNAWSGSLASQLTEVQKKQLIEEFNIQNKATIILNIGKYEEISQLMGAIRISLAKMFNLETKDDFKLLWVVDFPLFEFSEQENRYVAAHHPFTSPKEESLADFDTNKKDALACAYDLVMNGFEIGGGSQRITNSEIQQRMFDAVELNQKQVEANFGWFMNAYKYGAPYHAGIAWGLDRISMILTDSNSIRDVIAFPKNSLGIDMMSNAPDLVSDKQLDELNIKTVE.

L-aspartate is bound at residue Glu169. The aspartate stretch occupies residues 193 to 196 (QLFK). Arg215 serves as a coordination point for L-aspartate. ATP is bound by residues 215–217 (RDE) and Gln224. His438 is a binding site for L-aspartate. Glu472 provides a ligand contact to ATP. Arg479 is an L-aspartate binding site. 524 to 527 (GLDR) provides a ligand contact to ATP.

The protein belongs to the class-II aminoacyl-tRNA synthetase family. Type 1 subfamily. Homodimer.

It localises to the cytoplasm. It catalyses the reaction tRNA(Asp) + L-aspartate + ATP = L-aspartyl-tRNA(Asp) + AMP + diphosphate. In terms of biological role, catalyzes the attachment of L-aspartate to tRNA(Asp) in a two-step reaction: L-aspartate is first activated by ATP to form Asp-AMP and then transferred to the acceptor end of tRNA(Asp). The chain is Aspartate--tRNA ligase from Mycoplasma capricolum subsp. capricolum (strain California kid / ATCC 27343 / NCTC 10154).